We begin with the raw amino-acid sequence, 161 residues long: uncharacterized protein (161 aa).

A helical transmembrane segment spans residues 30–50; the sequence is GVILFRLLGVILFRLLGVILF.

The protein localises to the membrane. This is an uncharacterized protein from Homo sapiens (Human).